The sequence spans 419 residues: Serine--tRNA ligase (419 aa).

226 to 228 (TSE) serves as a coordination point for L-serine. ATP is bound by residues 257-259 (RRE) and Val273. Glu280 provides a ligand contact to L-serine. 344 to 347 (ELTS) lines the ATP pocket. Thr379 serves as a coordination point for L-serine.

This sequence belongs to the class-II aminoacyl-tRNA synthetase family. Type-1 seryl-tRNA synthetase subfamily. In terms of assembly, homodimer. The tRNA molecule binds across the dimer.

The protein localises to the cytoplasm. The catalysed reaction is tRNA(Ser) + L-serine + ATP = L-seryl-tRNA(Ser) + AMP + diphosphate + H(+). The enzyme catalyses tRNA(Sec) + L-serine + ATP = L-seryl-tRNA(Sec) + AMP + diphosphate + H(+). It functions in the pathway aminoacyl-tRNA biosynthesis; selenocysteinyl-tRNA(Sec) biosynthesis; L-seryl-tRNA(Sec) from L-serine and tRNA(Sec): step 1/1. Its function is as follows. Catalyzes the attachment of serine to tRNA(Ser). Is also able to aminoacylate tRNA(Sec) with serine, to form the misacylated tRNA L-seryl-tRNA(Sec), which will be further converted into selenocysteinyl-tRNA(Sec). The sequence is that of Serine--tRNA ligase from Mycobacterium tuberculosis (strain CDC 1551 / Oshkosh).